Here is a 339-residue protein sequence, read N- to C-terminus: Uroporphyrinogen decarboxylase (339 aa).

Substrate is bound by residues 23–27 (RQAGR), Asp-72, Tyr-147, Thr-202, and His-315.

Belongs to the uroporphyrinogen decarboxylase family. Homodimer.

Its subcellular location is the cytoplasm. It carries out the reaction uroporphyrinogen III + 4 H(+) = coproporphyrinogen III + 4 CO2. It functions in the pathway porphyrin-containing compound metabolism; protoporphyrin-IX biosynthesis; coproporphyrinogen-III from 5-aminolevulinate: step 4/4. Functionally, catalyzes the decarboxylation of four acetate groups of uroporphyrinogen-III to yield coproporphyrinogen-III. The polypeptide is Uroporphyrinogen decarboxylase (Geobacter sp. (strain M21)).